Consider the following 153-residue polypeptide: MLAFNFFGATEGGLFDINATLPLMAIQVVALTYILNSLFFKPVGKVVEKREKFVSNNIMEAKNKLSEVEKLEADLLSQLQSARSEAQKIVSDAENESDKLYKEALELANNEANASKEKARLEIENQTSSARDQLFKQADDLSELIVNRLILEK.

Residues 23–40 traverse the membrane as a helical segment; sequence LMAIQVVALTYILNSLFF.

Belongs to the ATPase B chain family. F-type ATPases have 2 components, F(1) - the catalytic core - and F(0) - the membrane proton channel. F(1) has five subunits: alpha(3), beta(3), gamma(1), delta(1), epsilon(1). F(0) has four main subunits: a(1), b(1), b'(1) and c(10-14). The alpha and beta chains form an alternating ring which encloses part of the gamma chain. F(1) is attached to F(0) by a central stalk formed by the gamma and epsilon chains, while a peripheral stalk is formed by the delta, b and b' chains.

Its subcellular location is the cellular thylakoid membrane. Functionally, f(1)F(0) ATP synthase produces ATP from ADP in the presence of a proton or sodium gradient. F-type ATPases consist of two structural domains, F(1) containing the extramembraneous catalytic core and F(0) containing the membrane proton channel, linked together by a central stalk and a peripheral stalk. During catalysis, ATP synthesis in the catalytic domain of F(1) is coupled via a rotary mechanism of the central stalk subunits to proton translocation. Component of the F(0) channel, it forms part of the peripheral stalk, linking F(1) to F(0). The b'-subunit is a diverged and duplicated form of b found in plants and photosynthetic bacteria. The protein is ATP synthase subunit b' of Prochlorococcus marinus (strain MIT 9515).